The sequence spans 222 residues: MASSSLSTLCSSTSSSLHPNSKLSHSLSAKLSSKANVSVQFLGKKQSPLLSSTPRFLTVIAMAPPKPGGKAKKVVGVIKLALEAGKATPAPPVGPALGSKGVNIMAFCKDYNARTADKAGYIIPVEITVFDDKSFTFILKTPPASVLLLKAAGVEKGSKDPQQDKVGVITIDQLRTIAAEKLPDLNCTTIESAMRIIAGTAANMGIDIDPPILEPKKKAVLL.

Residues 1–20 form a disordered region; it reads MASSSLSTLCSSTSSSLHPN. The N-terminal 62 residues, 1 to 62, are a transit peptide targeting the chloroplast; sequence MASSSLSTLC…TPRFLTVIAM (62 aa).

This sequence belongs to the universal ribosomal protein uL11 family. As to quaternary structure, part of the ribosomal stalk of the 50S ribosomal subunit. Interacts with L10 and the large rRNA to form the base of the stalk. L10 forms an elongated spine to which L12 dimers bind in a sequential fashion forming a multimeric L10(L12)X complex.

The protein resides in the plastid. It localises to the chloroplast. Functionally, forms part of the ribosomal stalk which helps the ribosome interact with GTP-bound translation factors. The sequence is that of Large ribosomal subunit protein uL11c (RPL11) from Arabidopsis thaliana (Mouse-ear cress).